The sequence spans 123 residues: Fluoride-specific ion channel FluC 1 (123 aa).

3 consecutive transmembrane segments (helical) span residues 33 to 53 (TFLI…LFGV), 59 to 79 (YGTM…TTFS), and 98 to 118 (VFYL…GAML). Residues G73 and T76 each coordinate Na(+).

Belongs to the fluoride channel Fluc/FEX (TC 1.A.43) family.

The protein resides in the cell inner membrane. It carries out the reaction fluoride(in) = fluoride(out). With respect to regulation, na(+) is not transported, but it plays an essential structural role and its presence is essential for fluoride channel function. Functionally, fluoride-specific ion channel. Important for reducing fluoride concentration in the cell, thus reducing its toxicity. The chain is Fluoride-specific ion channel FluC 1 from Brucella melitensis biotype 1 (strain ATCC 23456 / CCUG 17765 / NCTC 10094 / 16M).